The chain runs to 385 residues: 1-deoxy-D-xylulose 5-phosphate reductoisomerase (385 aa).

Thr10, Gly11, Ser12, Ile13, Lys37, and Asn124 together coordinate NADPH. Residue Lys125 participates in 1-deoxy-D-xylulose 5-phosphate binding. Glu126 serves as a coordination point for NADPH. Asp150 contributes to the Mn(2+) binding site. Residues Ser151, Glu152, Ser176, and His199 each coordinate 1-deoxy-D-xylulose 5-phosphate. Position 152 (Glu152) interacts with Mn(2+). Gly205 contacts NADPH. 1-deoxy-D-xylulose 5-phosphate contacts are provided by Ser212, Asn217, Lys218, and Glu221. Mn(2+) is bound at residue Glu221.

It belongs to the DXR family. Mg(2+) serves as cofactor. Mn(2+) is required as a cofactor.

It catalyses the reaction 2-C-methyl-D-erythritol 4-phosphate + NADP(+) = 1-deoxy-D-xylulose 5-phosphate + NADPH + H(+). It functions in the pathway isoprenoid biosynthesis; isopentenyl diphosphate biosynthesis via DXP pathway; isopentenyl diphosphate from 1-deoxy-D-xylulose 5-phosphate: step 1/6. In terms of biological role, catalyzes the NADPH-dependent rearrangement and reduction of 1-deoxy-D-xylulose-5-phosphate (DXP) to 2-C-methyl-D-erythritol 4-phosphate (MEP). The protein is 1-deoxy-D-xylulose 5-phosphate reductoisomerase of Clostridium botulinum (strain Langeland / NCTC 10281 / Type F).